We begin with the raw amino-acid sequence, 488 residues long: MAYSQGGGKKKVCYYYDGDIGNYYYGQGHPMKPHRIRMTHNLLLNYGLYRKMEIYRPHKATAEEMTKYHSDEYIKFLRSIRPDNMSEYSKQMQRFNVGEDCPVFDGLFEFCQLSTGGSVAGAVKLNRQQTDMAVNWAGGLHHAKKSEASGFCYVNDIVLAILELLKYHQRVLYIDIDIHHGDGVEEAFYTTDRVMTVSEVSMVNNFPGTGDLRDIGAGKGKYYAVNFPMRDGIDDESYGQIFKPIISKVMEMYQPSAVVLQCGADSLSGDRLGCFNLTVKGHAKCVEVVKTFNLPLLMLGGGGYTIRNVARCWTYETAVALDCEIPNELPYNDYFEYFGPDFKLHISPSNMTNQNTPEYMEKIKQRLFENLRMLPHAPGVQMQAIPEDAVHEDSGDEDGEDPDKRISIRASDKRIACDEEFSDSEDEGEGGRRNVADHKKGAKKARIEEDKKETEDKKADVKEEDKSKDNSGEKTDTKGAKSEQLSNP.

Residues 9-322 (KKKVCYYYDG…WTYETAVALD (314 aa)) form a histone deacetylase region. Residues glycine 28 and lysine 32 each coordinate 1D-myo-inositol 1,4,5,6-tetrakisphosphate. Histidine 142 is an active-site residue. Aspartate 177, histidine 179, and aspartate 265 together coordinate Zn(2+). 1D-myo-inositol 1,4,5,6-tetrakisphosphate is bound at residue arginine 271. The tract at residues 389–488 (AVHEDSGDED…GAKSEQLSNP (100 aa)) is disordered. Residues 402 to 417 (PDKRISIRASDKRIAC) are compositionally biased toward basic and acidic residues. Over residues 418–428 (DEEFSDSEDEG) the composition is skewed to acidic residues. Over residues 429 to 481 (EGGRRNVADHKKGAKKARIEEDKKETEDKKADVKEEDKSKDNSGEKTDTKGAK) the composition is skewed to basic and acidic residues.

This sequence belongs to the histone deacetylase family. HD type 1 subfamily. Requires Zn(2+) as cofactor.

It is found in the nucleus. Its subcellular location is the cytoplasm. It catalyses the reaction N(6)-acetyl-L-lysyl-[histone] + H2O = L-lysyl-[histone] + acetate. It carries out the reaction N(6)-acetyl-L-lysyl-[protein] + H2O = L-lysyl-[protein] + acetate. The enzyme catalyses N(6)-(2E)-butenoyl-L-lysyl-[protein] + H2O = (2E)-2-butenoate + L-lysyl-[protein]. The catalysed reaction is N(6)-(2-hydroxyisobutanoyl)-L-lysyl-[protein] + H2O = 2-hydroxy-2-methylpropanoate + L-lysyl-[protein]. It catalyses the reaction N(6)-[(S)-lactoyl]-L-lysyl-[protein] + H2O = (S)-lactate + L-lysyl-[protein]. Its activity is regulated as follows. Inositol tetraphosphate (1D-myo-inositol 1,4,5,6-tetrakisphosphate) may act as an intermolecular glue between HDAC2 and N-Cor repressor complex components. Histone deacetylase that catalyzes the deacetylation of lysine residues on the N-terminal part of the core histones (H2A, H2B, H3 and H4). Histone deacetylation gives a tag for epigenetic repression and plays an important role in transcriptional regulation, cell cycle progression and developmental events. Histone deacetylases act via the formation of large multiprotein complexes. Also deacetylates non-histone proteins. In addition to protein deacetylase activity, also acts as a protein-lysine deacylase by recognizing other acyl groups: catalyzes removal of (2E)-butenoyl (crotonyl), lactoyl (lactyl) and 2-hydroxyisobutanoyl (2-hydroxyisobutyryl) acyl groups from lysine residues, leading to protein decrotonylation, delactylation and de-2-hydroxyisobutyrylation, respectively. In Gallus gallus (Chicken), this protein is Histone deacetylase 2 (HDAC2).